The following is a 326-amino-acid chain: Phosphate acyltransferase (326 aa).

Belongs to the PlsX family. Homodimer. Probably interacts with PlsY.

It localises to the cytoplasm. It catalyses the reaction a fatty acyl-[ACP] + phosphate = an acyl phosphate + holo-[ACP]. Its pathway is lipid metabolism; phospholipid metabolism. Its function is as follows. Catalyzes the reversible formation of acyl-phosphate (acyl-PO(4)) from acyl-[acyl-carrier-protein] (acyl-ACP). This enzyme utilizes acyl-ACP as fatty acyl donor, but not acyl-CoA. In Thermus thermophilus (strain ATCC BAA-163 / DSM 7039 / HB27), this protein is Phosphate acyltransferase.